The chain runs to 267 residues: Tetrahydromethanopterin S-methyltransferase subunit C (267 aa).

7 helical membrane passes run 19 to 39, 75 to 95, 97 to 117, 140 to 160, 162 to 182, 198 to 218, and 221 to 241; these read IMALGIVGGLVGIYLGNFAPP, IGMLALGMGILAALFGLSVGG, AGPIVAIVVAAIIGGVIGALA, TLVILGLSVVIAGSFDFASVV, YVVANGYIALIFIIGGMGILH, LMLAVEKGAIALIIAGFASSL, and GLMAAGLNMLIGIIIWYVAFS.

Belongs to the MtrC family. As to quaternary structure, the complex is composed of 8 subunits; MtrA, MtrB, MtrC, MtrD, MtrE, MtrF, MtrG and MtrH.

The protein localises to the cell membrane. The enzyme catalyses 5-methyl-5,6,7,8-tetrahydromethanopterin + coenzyme M + 2 Na(+)(in) = 5,6,7,8-tetrahydromethanopterin + methyl-coenzyme M + 2 Na(+)(out). It participates in one-carbon metabolism; methanogenesis from CO(2); methyl-coenzyme M from 5,10-methylene-5,6,7,8-tetrahydromethanopterin: step 2/2. Functionally, part of a complex that catalyzes the formation of methyl-coenzyme M and tetrahydromethanopterin from coenzyme M and methyl-tetrahydromethanopterin. This is an energy-conserving, sodium-ion translocating step. The chain is Tetrahydromethanopterin S-methyltransferase subunit C from Methanosarcina barkeri (strain Fusaro / DSM 804).